Here is a 255-residue protein sequence, read N- to C-terminus: Triosephosphate isomerase (255 aa).

Position 9–11 (9–11 (NWK)) interacts with substrate. Catalysis depends on His-95, which acts as the Electrophile. Glu-167 serves as the catalytic Proton acceptor. Substrate-binding positions include Gly-173, Ser-212, and 233–234 (GG).

The protein belongs to the triosephosphate isomerase family. As to quaternary structure, homodimer.

Its subcellular location is the cytoplasm. It catalyses the reaction D-glyceraldehyde 3-phosphate = dihydroxyacetone phosphate. It participates in carbohydrate biosynthesis; gluconeogenesis. Its pathway is carbohydrate degradation; glycolysis; D-glyceraldehyde 3-phosphate from glycerone phosphate: step 1/1. In terms of biological role, involved in the gluconeogenesis. Catalyzes stereospecifically the conversion of dihydroxyacetone phosphate (DHAP) to D-glyceraldehyde-3-phosphate (G3P). In Sodalis glossinidius (strain morsitans), this protein is Triosephosphate isomerase.